The sequence spans 473 residues: PTS system trehalose-specific EIIBC component (473 aa).

The region spanning 1–89 (MMSKINQTDI…IASTGQAQVD (89 aa)) is the PTS EIIB type-1 domain. Over 1–110 (MMSKINQTDI…MKWHEQLISH (110 aa)) the chain is Cytoplasmic. The active-site Phosphocysteine intermediate; for EIIB activity is cysteine 29. A Phosphocysteine; by EIIA modification is found at cysteine 29. One can recognise a PTS EIIC type-1 domain in the interval 109 to 473 (SHFAVIFFPL…KYRLGTLDIV (365 aa)). The chain crosses the membrane as a helical span at residues 111 to 131 (FAVIFFPLLPALISGGLILGF). Residues 132-158 (RNVIGDLPMSNGQTLAQMYPSLQTIYD) are Periplasmic-facing. The helical transmembrane segment at 159–179 (FLWLIGEAIFFYLPVGICWSA) threads the bilayer. The Cytoplasmic segment spans residues 180–187 (VKKMGGTP). Residues 188 to 208 (ILGIVLGVTLVSPQLMNAYLL) traverse the membrane as a helical segment. Over 209 to 225 (GQQLPEVWDFGMFSIAK) the chain is Periplasmic. The chain crosses the membrane as a helical span at residues 226-246 (VGYQAQVIPALLAGLALGVIE). Residues 247-258 (TRLKRIVPDYLY) are Cytoplasmic-facing. The chain crosses the membrane as a helical span at residues 259 to 279 (LVVVPVCSLILAVFLAHALIG). Topologically, residues 280–300 (PFGRMIGDGVAFAVRHLMTGS) are periplasmic. Residues 301 to 321 (FAPIGAALFGFLYAPLVITGV) form a helical membrane-spanning segment. The Cytoplasmic segment spans residues 322-340 (HQTTLAIDLQMIQSMGGTP). A helical membrane pass occupies residues 341–361 (VWPLIALSNIAQGSAVIGIII). Residues 362-370 (SSRKHNERE) are Periplasmic-facing. Residues 371–391 (ISVPAAISAWLGVTEPAMYGI) form a helical membrane-spanning segment. Over 392-398 (NLKYRFP) the chain is Cytoplasmic. The chain crosses the membrane as a helical span at residues 399-419 (MLCAMIGSGLAGLLCGLNGVM). Over 420–440 (ANGIGVGGLPGILSIQPSYWQ) the chain is Periplasmic. A helical transmembrane segment spans residues 441–461 (VFALAMAIAIIIPIVLTSFIY). Topologically, residues 462-473 (QRKYRLGTLDIV) are cytoplasmic.

Its subcellular location is the cell inner membrane. It carries out the reaction alpha,alpha-trehalose(out) + N(pros)-phospho-L-histidyl-[protein] = alpha,alpha-trehalose 6-phosphate(in) + L-histidyl-[protein]. In terms of biological role, the phosphoenolpyruvate-dependent sugar phosphotransferase system (sugar PTS), a major carbohydrate active transport system, catalyzes the phosphorylation of incoming sugar substrates concomitantly with their translocation across the cell membrane. This system is involved in trehalose transport at low osmolarity. The sequence is that of PTS system trehalose-specific EIIBC component (treB) from Escherichia coli (strain K12).